The primary structure comprises 132 residues: Small ribosomal subunit protein uS9 (132 aa).

Residues 104–132 are disordered; it reads GYLTRDPRMKERKKYGLRKARRAPQFSKR. Positions 113–132 are enriched in basic residues; that stretch reads KERKKYGLRKARRAPQFSKR.

The protein belongs to the universal ribosomal protein uS9 family.

In Natranaerobius thermophilus (strain ATCC BAA-1301 / DSM 18059 / JW/NM-WN-LF), this protein is Small ribosomal subunit protein uS9.